The sequence spans 491 residues: Calcium/calmodulin-dependent protein kinase type II delta 1 chain (491 aa).

Residues 13–271 (YQLYEELGKG…AAEALKHPWI (259 aa)) enclose the Protein kinase domain. ATP contacts are provided by residues 19–27 (LGKGAFSVV) and lysine 42. Aspartate 135 acts as the Proton acceptor in catalysis. A Phosphothreonine modification is found at threonine 286. Serine 314 is subject to Phosphoserine. A disordered region spans residues 315–354 (SKNPYKKPDGVKEPQTTVIHNPTDGNKESSESTNTTIEDE). Positions 328–338 (PQTTVIHNPTD) are enriched in polar residues. A Phosphothreonine modification is found at threonine 350.

The protein belongs to the protein kinase superfamily. CAMK Ser/Thr protein kinase family. CaMK subfamily. CAMK2 is composed of four different chains: alpha, beta, gamma, and delta. The different isoforms assemble into homo- or heteromultimeric holoenzymes composed of 8 to 12 subunits. First detected at the 18-somite stage where expression is restricted to somite boundaries. At 24 hpf, expression is elevated in epidermal tissue and in the hatching gland. After 24 hpf, expression dimishes, but persists at low levels along the dorsal trunk. At 48 hpf, expression is restricted at a low level to the forebrain. At 72 hpf, weak expression reappears along the entire dorsal trunk in discrete cell bodies.

It catalyses the reaction L-seryl-[protein] + ATP = O-phospho-L-seryl-[protein] + ADP + H(+). The enzyme catalyses L-threonyl-[protein] + ATP = O-phospho-L-threonyl-[protein] + ADP + H(+). With respect to regulation, autophosphorylation of CAMK2 plays an important role in the regulation of the kinase activity. Functionally, caM-kinase II (CAMK2) is a prominent kinase in the central nervous system. The protein is Calcium/calmodulin-dependent protein kinase type II delta 1 chain of Danio rerio (Zebrafish).